Reading from the N-terminus, the 99-residue chain is RNA-binding protein Hfq (99 aa).

One can recognise a Sm domain in the interval 9-68; that stretch reads DPFLNALRRERVPVSIYLVNGIKLQGQIESFDQFVILLKNTVSQMVYKHAISTVVPSRPV. The interval 64–99 is disordered; it reads PSRPVSHHSNNPGGSNNYHGSNTTAQQQSQDADDAE. Over residues 70–93 the composition is skewed to low complexity; that stretch reads HHSNNPGGSNNYHGSNTTAQQQSQ.

Belongs to the Hfq family. As to quaternary structure, homohexamer.

Functionally, RNA chaperone that binds small regulatory RNA (sRNAs) and mRNAs to facilitate mRNA translational regulation in response to envelope stress, environmental stress and changes in metabolite concentrations. Also binds with high specificity to tRNAs. The chain is RNA-binding protein Hfq from Pectobacterium atrosepticum (strain SCRI 1043 / ATCC BAA-672) (Erwinia carotovora subsp. atroseptica).